The chain runs to 585 residues: S-antigen protein (585 aa).

The N-terminal stretch at 1–23 is a signal peptide; the sequence is MNRILSVTLCLFFIYLYIYKTYG. A disordered region spans residues 51-585; sequence NGKGQKYEDL…NSIINMLIGM (535 aa). Over residues 59-85 the composition is skewed to acidic residues; sequence DLEEEKEGENDDEEDSNSEESNNDEEN. Over residues 96 to 113 the composition is skewed to basic and acidic residues; the sequence is QETHGSEDEVSNGREDKV. 56 tandem repeats follow at residues 102–109, 110–117, 118–125, 126–133, 134–141, 142–149, 150–157, 158–165, 166–173, 174–181, 182–189, 190–197, 198–205, 206–213, 214–221, 222–229, 230–237, 238–245, 246–253, 254–261, 262–269, 270–277, 278–285, 286–293, 294–301, 302–309, 310–317, 318–325, 326–333, 334–341, 342–349, 350–357, 358–365, 366–373, 374–381, 382–389, 390–397, 398–405, 406–413, 414–421, 422–429, 430–437, 438–445, 446–453, 454–461, 462–469, 470–477, 478–485, 486–493, 494–501, 502–509, 510–517, 518–525, 526–533, 534–541, and 542–549. The segment at 102–549 is 56 X 8 AA tandem repeats of E-D-[EK]-V-S-N-G-[RG]; it reads EDEVSNGRED…GREDEVSNGR (448 aa). The segment covering 117 to 129 has biased composition (acidic residues); the sequence is GEDEVSNGGEDEV. Basic and acidic residues-rich tracts occupy residues 194 to 209 and 218 to 233; these read SNGR…EDKV. Basic and acidic residues predominate over residues 274–297; sequence SNGREDKVSNGREDEVSNGREDKV. Over residues 322–337 the composition is skewed to basic and acidic residues; sequence SNGREDKVSNGREDKV. 2 stretches are compositionally biased toward basic and acidic residues: residues 362 to 393 and 402 to 417; these read SNGR…EDKV. Positions 442 to 465 are enriched in basic and acidic residues; it reads SNGREDKVSNGREDKVSNGREDKV. Residues 469 to 481 are compositionally biased toward acidic residues; it reads GEDEVSNGGEDEV. Basic and acidic residues-rich tracts occupy residues 530 to 553 and 560 to 569; these read SNGR…EDKG and ELSHNSESHT. A compositionally biased stretch (low complexity) spans 576–585; that stretch reads NSIINMLIGM.

It localises to the parasitophorous vacuole. In terms of biological role, s antigens are soluble heat-stable proteins present in the sera of some infected individuals. This Plasmodium falciparum (isolate 3D7) protein is S-antigen protein.